The primary structure comprises 292 residues: Bis(5'-nucleosyl)-tetraphosphatase, symmetrical (292 aa).

Belongs to the Ap4A hydrolase family.

The catalysed reaction is P(1),P(4)-bis(5'-adenosyl) tetraphosphate + H2O = 2 ADP + 2 H(+). In terms of biological role, hydrolyzes diadenosine 5',5'''-P1,P4-tetraphosphate to yield ADP. This chain is Bis(5'-nucleosyl)-tetraphosphatase, symmetrical, found in Yersinia enterocolitica serotype O:8 / biotype 1B (strain NCTC 13174 / 8081).